Here is a 438-residue protein sequence, read N- to C-terminus: DNA polymerase IV 1 (438 aa).

The region spanning 46–226 (LAHIDCDAFY…KPVTMIWGVG (181 aa)) is the UmuC domain. Residues aspartate 50 and aspartate 143 each contribute to the Mg(2+) site. Glutamate 144 is a catalytic residue.

This sequence belongs to the DNA polymerase type-Y family. Monomer. Requires Mg(2+) as cofactor.

It localises to the cytoplasm. It catalyses the reaction DNA(n) + a 2'-deoxyribonucleoside 5'-triphosphate = DNA(n+1) + diphosphate. Its function is as follows. Poorly processive, error-prone DNA polymerase involved in untargeted mutagenesis. Copies undamaged DNA at stalled replication forks, which arise in vivo from mismatched or misaligned primer ends. These misaligned primers can be extended by PolIV. Exhibits no 3'-5' exonuclease (proofreading) activity. May be involved in translesional synthesis, in conjunction with the beta clamp from PolIII. This chain is DNA polymerase IV 1 (dinB1), found in Mesorhizobium japonicum (strain LMG 29417 / CECT 9101 / MAFF 303099) (Mesorhizobium loti (strain MAFF 303099)).